The sequence spans 424 residues: MLDIKFLRTNFEEVKAKLQHRGEDLTDFGRFEELDTRRRELLVQTEELKSKRNEVSQQISVLKREKKDAEALILEMREVGEKVKDFDNELRTVEEDLERLMLSIPNIPHESAPVGETEDDNVVARTWGEVKEFTFEPKPHWDLATDLGILDFERAGKVTGSRFVFYKGAGARLERALISFMLDLHTDEHGYEEVLPPYMVNRASMTGTGQLPKFEEDAFRIESEDYFLIPTAEVPVTNMHRDEILNKEQLPIRYAAFSSCFRSEAGSAGRDTRGLIRQHQFNKVELVKFVKPEDSYEELEKLTNDAERVLQLLELPYRVMSMCTGDLGFTAAKKYDIEVWIPSYGTYREISSCSNFEAFQARRANIRFRREPNGKPEHVHTLNGSGLAIGRTVAAILENYQQEDGTIIIPEVLRPYMGGKTVIK.

231 to 233 provides a ligand contact to L-serine; the sequence is TAE. 262–264 lines the ATP pocket; the sequence is RSE. Residue glutamate 285 participates in L-serine binding. 349–352 provides a ligand contact to ATP; the sequence is EISS. Residue serine 385 participates in L-serine binding.

The protein belongs to the class-II aminoacyl-tRNA synthetase family. Type-1 seryl-tRNA synthetase subfamily. As to quaternary structure, homodimer. The tRNA molecule binds across the dimer.

The protein localises to the cytoplasm. It carries out the reaction tRNA(Ser) + L-serine + ATP = L-seryl-tRNA(Ser) + AMP + diphosphate + H(+). It catalyses the reaction tRNA(Sec) + L-serine + ATP = L-seryl-tRNA(Sec) + AMP + diphosphate + H(+). The protein operates within aminoacyl-tRNA biosynthesis; selenocysteinyl-tRNA(Sec) biosynthesis; L-seryl-tRNA(Sec) from L-serine and tRNA(Sec): step 1/1. In terms of biological role, catalyzes the attachment of serine to tRNA(Ser). Is also able to aminoacylate tRNA(Sec) with serine, to form the misacylated tRNA L-seryl-tRNA(Sec), which will be further converted into selenocysteinyl-tRNA(Sec). This is Serine--tRNA ligase from Bacillus cereus (strain G9842).